The chain runs to 257 residues: Imidazole glycerol phosphate synthase subunit HisF (257 aa).

Catalysis depends on residues D11 and D130.

This sequence belongs to the HisA/HisF family. As to quaternary structure, heterodimer of HisH and HisF.

It is found in the cytoplasm. The enzyme catalyses 5-[(5-phospho-1-deoxy-D-ribulos-1-ylimino)methylamino]-1-(5-phospho-beta-D-ribosyl)imidazole-4-carboxamide + L-glutamine = D-erythro-1-(imidazol-4-yl)glycerol 3-phosphate + 5-amino-1-(5-phospho-beta-D-ribosyl)imidazole-4-carboxamide + L-glutamate + H(+). Its pathway is amino-acid biosynthesis; L-histidine biosynthesis; L-histidine from 5-phospho-alpha-D-ribose 1-diphosphate: step 5/9. Its function is as follows. IGPS catalyzes the conversion of PRFAR and glutamine to IGP, AICAR and glutamate. The HisF subunit catalyzes the cyclization activity that produces IGP and AICAR from PRFAR using the ammonia provided by the HisH subunit. The chain is Imidazole glycerol phosphate synthase subunit HisF from Shewanella frigidimarina (strain NCIMB 400).